The chain runs to 321 residues: Cilia- and flagella-associated protein 161 (321 aa).

Residues 275 to 321 (LSTMLDLPKPPAEDTRALEQEREQVSDPGARSTPDARGCVPQCTLPM) form a disordered region. Positions 285–299 (PAEDTRALEQEREQV) are enriched in basic and acidic residues.

Microtubule inner protein component of sperm flagellar doublet microtubules. In terms of tissue distribution, expressed in trachea multiciliated cells.

It localises to the cytoplasm. Its subcellular location is the cytoskeleton. The protein resides in the cilium axoneme. It is found in the flagellum axoneme. Its function is as follows. Microtubule inner protein (MIP) part of the dynein-decorated doublet microtubules (DMTs) in cilia axoneme, which is required for motile cilia beating. This chain is Cilia- and flagella-associated protein 161, found in Bos taurus (Bovine).